The chain runs to 332 residues: MEPFKHPIAILGAGSWGTALALVLARKGQKVRLWSYESDHVDEMQAEGVNNRYLPNYPFPETLKAYCDLKASLEGVTDILIVVPSFAFHEVITRMKPLIDAKTRIAWGTKGLAKGSRLLHEVVATELGQVPMAVISGPSLATEVAANLPTAVSLASNNSQFSKDLIERLHGQRFRVYKNDDMIGVELCGSVKNILAIATGISDGLKLGSNARAALITRGLTEMGRLVSVFGGKQETLTGLAGLGDLVLTCTDNQSRNRRFGLALGEGVDKKEAQQSIGQAIEGLYNTDQVHALAQKHAIEMPLTFQVHRILHEDLDPQQAVQELLERSPKAE.

3 residues coordinate NADPH: Ser15, Trp16, and Lys110. Sn-glycerol 3-phosphate-binding residues include Lys110, Gly137, and Ser139. Residue Ala141 coordinates NADPH. Sn-glycerol 3-phosphate contacts are provided by Lys192, Asp245, Ser255, Arg256, and Asn257. Catalysis depends on Lys192, which acts as the Proton acceptor. Arg256 lines the NADPH pocket. Glu282 is a binding site for NADPH.

Belongs to the NAD-dependent glycerol-3-phosphate dehydrogenase family.

It localises to the cytoplasm. It catalyses the reaction sn-glycerol 3-phosphate + NAD(+) = dihydroxyacetone phosphate + NADH + H(+). It carries out the reaction sn-glycerol 3-phosphate + NADP(+) = dihydroxyacetone phosphate + NADPH + H(+). It functions in the pathway membrane lipid metabolism; glycerophospholipid metabolism. Functionally, catalyzes the reduction of the glycolytic intermediate dihydroxyacetone phosphate (DHAP) to sn-glycerol 3-phosphate (G3P), the key precursor for phospholipid synthesis. In Coxiella burnetii (strain RSA 331 / Henzerling II), this protein is Glycerol-3-phosphate dehydrogenase [NAD(P)+].